The chain runs to 372 residues: MAAVKRIVVLPGDHIGREVVEEAVKVLGAVEQSLSDVHFDFQYHLVGGAAIDATGSALPDEALGAAKEADAVLLGAVGGPKWQGGAVRPEQGLLKLRQELGVYANLRPCNFAADSLLELSPLRPEIARDTDIMVVRELLGGSYFGERHEDEGDGVAWDTDKYTVKEVQRIARMAGFLALQHDPPLPVWSLDKANVLASSRLWRKTVEETFQSEFPNVQLQHQLIDSAAMILVKNPRAFNGVVVTSNMFGDIISDEASVIPGSLGLLPSASLASLPDSKSAFGLYEPCHGSAPDLPAGKANPIGCILSAAMMLKLSLNMVAAGEAVEQAVQEVLDSGVRTGDLLGSSSTSEVGDAIALAVKEALRRQSAAGLS.

Residue glycine 79–glutamate 90 participates in NAD(+) binding. Residues arginine 97, arginine 107, arginine 136, and aspartate 225 each coordinate substrate. The Mg(2+) site is built by aspartate 225, aspartate 250, and aspartate 254. Glycine 289 to asparagine 300 contacts NAD(+).

This sequence belongs to the isocitrate and isopropylmalate dehydrogenases family. In terms of assembly, homodimer. It depends on Mg(2+) as a cofactor. Mn(2+) is required as a cofactor.

The protein resides in the cytoplasm. It carries out the reaction (2R,3S)-3-isopropylmalate + NAD(+) = 4-methyl-2-oxopentanoate + CO2 + NADH. The protein operates within amino-acid biosynthesis; L-leucine biosynthesis; L-leucine from 3-methyl-2-oxobutanoate: step 3/4. Functionally, catalyzes the oxidation of 3-carboxy-2-hydroxy-4-methylpentanoate (3-isopropylmalate) to 3-carboxy-4-methyl-2-oxopentanoate. The product decarboxylates to 4-methyl-2 oxopentanoate. This chain is 3-isopropylmalate dehydrogenase (LEU2), found in Eremothecium gossypii (strain ATCC 10895 / CBS 109.51 / FGSC 9923 / NRRL Y-1056) (Yeast).